The following is a 1216-amino-acid chain: Phospholipase D B (1216 aa).

Over residues 1-14 (MNLSQEHAINQNLH) the composition is skewed to polar residues. The disordered stretch occupies residues 1–48 (MNLSQEHAINQNLHKNQKNEEKIEKKTINKDGRGQMNYDGEEGQGEKS). Basic and acidic residues predominate over residues 17-33 (QKNEEKIEKKTINKDGR). 2 consecutive EF-hand domains span residues 196-231 (RNADLTISLMNAIDRNGDQKIAFPEFVQALSIMCRG) and 232-267 (TKKERLRFTFEICDFNGDSLVSRDEVYSTVKAISDI). Ca(2+)-binding residues include D209, N211, D213, K215, and E220. One can recognise a PH domain in the interval 347–462 (EINMNGQLTK…WVNAIRFHSR (116 aa)). The 28-residue stretch at 585 to 612 (LSWSHHQKNAIIDQQIAFVGGIDICLMR) folds into the PLD phosphodiesterase 1 domain. Active-site residues include H590, K592, and D597. The segment at 732 to 844 (VSYGREKPTH…GLKSKNYKNN (113 aa)) is disordered. The segment covering 776-789 (NNSTNSENSENSYS) has biased composition (low complexity). Residues 790-813 (EFDEEDEEGNQEEEDEDEFDEFEK) are compositionally biased toward acidic residues. Residues 1036–1063 (EQIYVHSKVLIVDDRVAVIGSCNINDRS) form the PLD phosphodiesterase 2 domain. Active-site residues include H1041, K1043, and D1048.

Belongs to the phospholipase D family.

It is found in the cytoplasmic vesicle. It localises to the cytoplasm. The protein resides in the cell cortex. It catalyses the reaction a 1,2-diacyl-sn-glycero-3-phosphocholine + H2O = a 1,2-diacyl-sn-glycero-3-phosphate + choline + H(+). Inhibited by butan-1-ol. Plays a role in cell growth. Hydrolyzes membrane phospholipids, such as PtdCho (phosphatidylcholine), producing the free headgroup and PtdOH (phosphatidic acid; signaling molecule on its own). Involved in the inhibition of actin-based motility and endocytosis. Its inhibition causes complete collapse of F-actin organization. Plays an important role in cell migration by localizing along the anterior cell membrane. Overexpression leads to the inability to aggregate even at higher cell density. Also known as a negative regulator of quorum sensing. This chain is Phospholipase D B (pldB), found in Dictyostelium discoideum (Social amoeba).